A 308-amino-acid chain; its full sequence is Tyramine--L-glutamate ligase (308 aa).

Residues 89-291 (KSLLKSENID…LAELLIKNAN (203 aa)) enclose the ATP-grasp domain. 115-192 (TKIIESYPVK…QEFIDGENLS (78 aa)) lines the ATP pocket. Residues Asp-252, Glu-264, and Asn-266 each coordinate Mg(2+). Mn(2+) contacts are provided by Asp-252, Glu-264, and Asn-266.

Mg(2+) is required as a cofactor. Requires Mn(2+) as cofactor.

The catalysed reaction is tyramine + L-glutamate + ATP = gamma-L-glutamyltyramine + ADP + phosphate + H(+). It functions in the pathway cofactor biosynthesis; methanofuran biosynthesis. Its function is as follows. Catalyzes the formation of an amide bond between tyramine and the gamma carboxy group of L-glutamate. The enzyme also accepts phenylethylamine in vitro. This Methanocaldococcus jannaschii (strain ATCC 43067 / DSM 2661 / JAL-1 / JCM 10045 / NBRC 100440) (Methanococcus jannaschii) protein is Tyramine--L-glutamate ligase (mfnD).